Here is a 316-residue protein sequence, read N- to C-terminus: MTKEFHHVTVLLHETVDMLDIKPDGIYVDATLGGSGHSAYLLSKLGEEGHLYCFDQDQKAIDNAQVTLKSYIDKGQVTFIKDNFRHLKARLTALGVDEIDGILYDLGVSSPQLDERERGFSYKQDAPLDMRMDRQSLLTAYEVVNTYPFNDLVKIFFKYGEDKFSKQIARKIEQARAIKPIEATTELAELIKAAKPAKELKKKGHPAKQIFQAIRIEVNDELGAADESIQDAMELLALDGRISVITFHSLEDRLTKQLFKEASTVDVPKGLPLIPEDMKPKFELVSRKPILPSHSELTANKRAHSAKLRVAKKIRK.

S-adenosyl-L-methionine contacts are provided by residues 35–37, Asp55, Phe84, Asp105, and Gln112; that span reads SGH.

It belongs to the methyltransferase superfamily. RsmH family.

It localises to the cytoplasm. It carries out the reaction cytidine(1402) in 16S rRNA + S-adenosyl-L-methionine = N(4)-methylcytidine(1402) in 16S rRNA + S-adenosyl-L-homocysteine + H(+). Functionally, specifically methylates the N4 position of cytidine in position 1402 (C1402) of 16S rRNA. In Streptococcus pyogenes serotype M49 (strain NZ131), this protein is Ribosomal RNA small subunit methyltransferase H.